The sequence spans 198 residues: Recombination protein RecR (198 aa).

Residues 57–72 (CSICGNLTDQDPCAIC) form a C4-type zinc finger. The Toprim domain maps to 80 to 175 (STILIVEDSR…KVTRLARGLA (96 aa)).

The protein belongs to the RecR family.

May play a role in DNA repair. It seems to be involved in an RecBC-independent recombinational process of DNA repair. It may act with RecF and RecO. The chain is Recombination protein RecR from Streptococcus suis (strain 05ZYH33).